Reading from the N-terminus, the 326-residue chain is CRISPR-associated endonuclease Cas1 (326 aa).

The Mn(2+) site is built by E191, H255, and D269.

Belongs to the CRISPR-associated endonuclease Cas1 family. Homodimer. Interacts with Cas3, in the absence of crRNA. The cofactor is Mg(2+). It depends on Mn(2+) as a cofactor.

In terms of biological role, CRISPR (clustered regularly interspaced short palindromic repeat), is an adaptive immune system that provides protection against mobile genetic elements (viruses, transposable elements and conjugative plasmids). CRISPR clusters contain sequences complementary to antecedent mobile elements and target invading nucleic acids. CRISPR clusters are transcribed and processed into CRISPR RNA (crRNA). Acts as a dsDNA endonuclease. Involved in the integration of spacer DNA into the CRISPR cassette. This is CRISPR-associated endonuclease Cas1 from Pectobacterium atrosepticum (strain SCRI 1043 / ATCC BAA-672) (Erwinia carotovora subsp. atroseptica).